The primary structure comprises 390 residues: Cathepsin D (390 aa).

Positions 1–44 (VIRIPLHKFTSIRRTMSEAAGXVXXLIAKGPISKYATGEPAVRQ) are cleaved as a propeptide — activation peptide. The 327-residue stretch at 59–385 (YYGEIGIGTP…DRDQNRVGLA (327 aa)) folds into the Peptidase A1 domain. Disulfide bonds link cysteine 71/cysteine 140 and cysteine 90/cysteine 97. Aspartate 77 is an active-site residue. Residues asparagine 114 and asparagine 241 are each glycosylated (N-linked (GlcNAc...) asparagine). A disulfide bond links cysteine 264 and cysteine 268. Residue aspartate 273 is part of the active site. Cysteine 307 and cysteine 344 are disulfide-bonded.

Belongs to the peptidase A1 family. As to quaternary structure, consists of a light chain and a heavy chain. Interacts with ADAM30; this leads to activation of CTSD. Interacts with GRN; stabilizes CTSD; increases its proteolytic activity. In terms of processing, N- and O-glycosylated. Undergoes proteolytic cleavage and activation by ADAM30.

The protein localises to the lysosome. The protein resides in the melanosome. Its subcellular location is the secreted. It localises to the extracellular space. The catalysed reaction is Specificity similar to, but narrower than, that of pepsin A. Does not cleave the 4-Gln-|-His-5 bond in B chain of insulin.. Functionally, acid protease active in intracellular protein breakdown. Plays a role in APP processing following cleavage and activation by ADAM30 which leads to APP degradation. This is Cathepsin D (CTSD) from Bos taurus (Bovine).